Consider the following 221-residue polypeptide: Early nodulin-like protein 4 (221 aa).

A signal peptide spans 1–21; sequence MVFVKMTDVYLMIVMLMGLGF. The region spanning 29–130 is the Phytocyanin domain; sequence HKFYVGGRDG…GQKLAVTVMS (102 aa). Residues asparagine 59 and asparagine 85 are each glycosylated (N-linked (GlcNAc...) asparagine). Residues cysteine 84 and cysteine 118 are joined by a disulfide bond. Positions 130–185 are disordered; sequence STGHHSHTPRHPSPSPSPSASPVRKALLSPAPIPVHKALSSPAPTPGVDPSHSEVL. Asparagine 197 carries the GPI-anchor amidated asparagine lipid modification. A propeptide spans 198–221 (removed in mature form); it reads LAGSVAPGVISLGLVLVIMISSMV.

Belongs to the early nodulin-like (ENODL) family. As to expression, confined to flowers.

The protein localises to the cell membrane. Its function is as follows. May act as a carbohydrate transporter. In Arabidopsis thaliana (Mouse-ear cress), this protein is Early nodulin-like protein 4.